Reading from the N-terminus, the 26-residue chain is MNQKHLLRFIKKSYRVDADRVVYDAK.

Belongs to the metallo-dependent hydrolases superfamily. Adenosine and AMP deaminases family. As to quaternary structure, homotetramer.

The catalysed reaction is AMP + H2O + H(+) = IMP + NH4(+). The protein operates within purine metabolism; IMP biosynthesis via salvage pathway; IMP from AMP: step 1/1. Its function is as follows. AMP deaminase plays a critical role in energy metabolism. This chain is AMP deaminase 1 (AMPD1), found in Gallus gallus (Chicken).